We begin with the raw amino-acid sequence, 417 residues long: Tyrosine--tRNA ligase (417 aa).

Residue Tyr36 participates in L-tyrosine binding. The 'HIGH' region signature appears at 41–50; that stretch reads PTADSLHIGH. Positions 170 and 174 each coordinate L-tyrosine. A 'KMSKS' region motif is present at residues 231–235; the sequence is KFGKS. An ATP-binding site is contributed by Lys234. Residues 351–417 enclose the S4 RNA-binding domain; the sequence is TNLVELLIEA…GKKKYFMIIH (67 aa).

The protein belongs to the class-I aminoacyl-tRNA synthetase family. TyrS type 1 subfamily. Homodimer.

It localises to the cytoplasm. It catalyses the reaction tRNA(Tyr) + L-tyrosine + ATP = L-tyrosyl-tRNA(Tyr) + AMP + diphosphate + H(+). Functionally, catalyzes the attachment of tyrosine to tRNA(Tyr) in a two-step reaction: tyrosine is first activated by ATP to form Tyr-AMP and then transferred to the acceptor end of tRNA(Tyr). The protein is Tyrosine--tRNA ligase of Macrococcus caseolyticus (strain JCSC5402) (Macrococcoides caseolyticum).